A 557-amino-acid chain; its full sequence is BZIP-type transcription factor MBZ1 (557 aa).

Over residues 171-194 (AKAQAQQRQQQQQQQLIQQTQRQT) the composition is skewed to low complexity. 2 disordered regions span residues 171 to 209 (AKAQAQQRQQQQQQQLIQQTQRQTSPKSRGKAPQPTDPI) and 221 to 273 (MRAK…RQLR). The span at 229–240 (EPESQSVLNNLP) shows a compositional bias: polar residues. The span at 254–271 (RLLASEEGKKLSSKERRQ) shows a compositional bias: basic and acidic residues. Residues 264–327 (LSSKERRQLR…KRLSDLTRML (64 aa)) enclose the bZIP domain. The interval 267-286 (KERRQLRNKVSARAFRSRRK) is basic motif. A leucine-zipper region spans residues 289–296 (ISQLEAEI). Residues 344–364 (PTGLPQGSPVKIEQNPQQEQN) form a disordered region.

The protein resides in the nucleus. Functionally, BZIP-type transcription factor that functions as either an activator or a suppressor, and which contributes to the regulation of fungal growth, conidiation, cell wall integrity, and virulence. Plays a key role in virulence against insects by mediating cell wall integrity, cell surface hydrophobicity, and adherence to hydrophobic surfaces. Exhibits negative regulation of subtilisin proteases, but positive control of an adhesin gene. The chain is BZIP-type transcription factor MBZ1 from Metarhizium robertsii (strain ARSEF 23 / ATCC MYA-3075) (Metarhizium anisopliae (strain ARSEF 23)).